The sequence spans 231 residues: Large ribosomal subunit protein uL1 (231 aa).

It belongs to the universal ribosomal protein uL1 family. In terms of assembly, part of the 50S ribosomal subunit.

Its function is as follows. Binds directly to 23S rRNA. The L1 stalk is quite mobile in the ribosome, and is involved in E site tRNA release. Protein L1 is also a translational repressor protein, it controls the translation of the L11 operon by binding to its mRNA. The chain is Large ribosomal subunit protein uL1 from Mycoplasmopsis synoviae (strain 53) (Mycoplasma synoviae).